Consider the following 697-residue polypeptide: Sialidase B (697 aa).

A signal peptide spans 1–29 (MNKRGLYSKLGISVVGISLLMGVPTLIHA). R245 is a substrate binding site. D270 acts as the Proton acceptor in catalysis. BNR repeat units follow at residues 280–291 (SYSDDNGKTWSE), 462–473 (TTSQNRGESWEQ), and 517–528 (LISDDSGQTWKK). The active site involves E541. R557 is a binding site for substrate. One copy of the BNR 4 repeat lies at 566–577 (MTSRDSGETWSK). R619 serves as a coordination point for substrate. Catalysis depends on Y653, which acts as the Nucleophile.

Belongs to the glycosyl hydrolase 33 family.

The enzyme catalyses Hydrolysis of alpha-(2-&gt;3)-, alpha-(2-&gt;6)-, alpha-(2-&gt;8)- glycosidic linkages of terminal sialic acid residues in oligosaccharides, glycoproteins, glycolipids, colominic acid and synthetic substrates.. This is Sialidase B (nanB) from Streptococcus pneumoniae serotype 4 (strain ATCC BAA-334 / TIGR4).